We begin with the raw amino-acid sequence, 559 residues long: Intestinal-type alkaline phosphatase (559 aa).

The N-terminal stretch at 1–19 is a signal peptide; that stretch reads MQGPWVLLLLGLRLQLSLS. Residue D61 coordinates Mg(2+). The Zn(2+) site is built by D61 and S111. Residue S111 is the Phosphoserine intermediate of the active site. Cysteines 140 and 202 form a disulfide. Residue N141 is glycosylated (N-linked (GlcNAc...) asparagine). S174 is a Mg(2+) binding site. E235 contributes to the Ca(2+) binding site. The N-linked (GlcNAc...) asparagine glycan is linked to N241. F288, E289, and D304 together coordinate Ca(2+). E330 provides a ligand contact to Mg(2+). 4 residues coordinate Zn(2+): D335, H339, D376, and H377. A glycan (N-linked (GlcNAc...) asparagine) is linked at N426. Residue H450 coordinates Zn(2+). A disulfide bond links C485 and C492. A disordered region spans residues 496–531; that stretch reads PPADESQTTTTTRQTTITTTTTTTTTTTTPVHNSAR. A compositionally biased stretch (low complexity) spans 503–524; the sequence is TTTTTRQTTITTTTTTTTTTTT. N528 carries GPI-anchor amidated asparagine lipidation. A propeptide spans 529 to 559 (removed in mature form); the sequence is SARSLGPATAPLALALLAGMLMLLLGAPAES.

Belongs to the alkaline phosphatase family. Homodimer. Mg(2+) serves as cofactor. It depends on Zn(2+) as a cofactor. Ca(2+) is required as a cofactor. Intestine and thymus.

The protein localises to the cell membrane. It catalyses the reaction a phosphate monoester + H2O = an alcohol + phosphate. Its function is as follows. Alkaline phosphatase that can hydrolyze various phosphate compounds. The sequence is that of Intestinal-type alkaline phosphatase (Iap) from Mus musculus (Mouse).